A 512-amino-acid polypeptide reads, in one-letter code: Secreted triacylglycerol lipase LIP5 (512 aa).

A signal peptide spans M1–A17. C118 and C292 are oxidised to a cystine. S203 serves as the catalytic Nucleophile. The N-linked (GlcNAc...) asparagine glycan is linked to N316. D352 is an active-site residue. N361 carries N-linked (GlcNAc...) asparagine glycosylation. H386 is an active-site residue. An N-linked (GlcNAc...) asparagine glycan is attached at N453. A disordered region spans residues K480–H512. A compositionally biased stretch (basic and acidic residues) spans G488–K497. The span at A498–H512 shows a compositional bias: basic residues.

It belongs to the AB hydrolase superfamily. Lipase family. Class Lip subfamily.

It localises to the secreted. It carries out the reaction a triacylglycerol + H2O = a diacylglycerol + a fatty acid + H(+). The enzyme catalyses a monoacylglycerol + H2O = glycerol + a fatty acid + H(+). It catalyses the reaction a diacylglycerol + H2O = a monoacylglycerol + a fatty acid + H(+). Functionally, secreted lipase that hydrolyzes acylglycerol lipids such as triacylglycerols and consequently releases free fatty acid. Can hydrolyze 4-nitrophenyl palmitate to release 4-nitrophenol and palmitoic acid. Due to an absence of fatty acid synthase genes in Malassezia species, secretory lipases are essential for the yeast to generate free fatty acids from degradation of sebum and assimilate them as lipid sources for growth. Plays an essential role at the pathogen-host interface during disease progression. The sequence is that of Secreted triacylglycerol lipase LIP5 from Malassezia restricta (strain ATCC 96810 / NBRC 103918 / CBS 7877) (Seborrheic dermatitis infection agent).